The primary structure comprises 497 residues: Cytochrome P450 26A1 (497 aa).

Cysteine 442 is a binding site for heme.

Belongs to the cytochrome P450 family. Requires heme as cofactor. In terms of tissue distribution, expressed in most fetal and adult tissues with highest levels in adult liver, heart, pituitary gland, adrenal gland, placenta and regions of the brain. Expressed at high levels in lung, pancreas, skin and uterus (at protein level). Lower expression level is detected in spleen, kidney, intestine and adipose tissue (at protein level).

It is found in the endoplasmic reticulum membrane. It localises to the microsome membrane. The enzyme catalyses all-trans-retinoate + reduced [NADPH--hemoprotein reductase] + O2 = all-trans-(4S)-hydroxyretinoate + oxidized [NADPH--hemoprotein reductase] + H2O + H(+). It carries out the reaction all-trans-(4S)-hydroxyretinoate + reduced [NADPH--hemoprotein reductase] + O2 = all-trans-(4S,16)-dihydroxyretinoate + oxidized [NADPH--hemoprotein reductase] + H2O + H(+). The catalysed reaction is all-trans-retinoate + reduced [NADPH--hemoprotein reductase] + O2 = all-trans-18-hydroxyretinoate + oxidized [NADPH--hemoprotein reductase] + H2O + H(+). In terms of biological role, a cytochrome P450 monooxygenase involved in the metabolism of retinoates (RAs), the active metabolites of vitamin A, and critical signaling molecules in animals. RAs exist as at least four different isomers: all-trans-RA (atRA), 9-cis-RA, 13-cis-RA, and 9,13-dicis-RA, where atRA is considered to be the biologically active isomer, although 9-cis-RA and 13-cis-RA also have activity. Catalyzes the hydroxylation of atRA primarily at C-4 and C-18, thereby contributing to the regulation of atRA homeostasis and signaling. Hydroxylation of atRA limits its biological activity and initiates a degradative process leading to its eventual elimination. Involved in the convertion of atRA to all-trans-4-oxo-RA. Able to metabolize other RAs such as 9-cis, 13-cis and 9,13-di-cis RA. Can oxidize all-trans-13,14-dihydroretinoate (DRA) to metabolites which could include all-trans-4-oxo-DRA, all-trans-4-hydroxy-DRA, all-trans-5,8-epoxy-DRA, and all-trans-18-hydroxy-DRA. May play a role in the oxidative metabolism of xenobiotics such as tazarotenic acid. This is Cytochrome P450 26A1 from Homo sapiens (Human).